The chain runs to 431 residues: Argininosuccinate lyase (431 aa).

The protein belongs to the lyase 1 family. Argininosuccinate lyase subfamily.

The protein localises to the cytoplasm. It catalyses the reaction 2-(N(omega)-L-arginino)succinate = fumarate + L-arginine. It functions in the pathway amino-acid biosynthesis; L-arginine biosynthesis; L-arginine from L-ornithine and carbamoyl phosphate: step 3/3. The chain is Argininosuccinate lyase from Xanthomonas campestris pv. campestris (strain ATCC 33913 / DSM 3586 / NCPPB 528 / LMG 568 / P 25).